The following is a 441-amino-acid chain: Glutamyl-tRNA reductase (441 aa).

Residues 47–50, Ser110, 115–117, and Gln121 each bind substrate; these read TCNR and ERE. Cys48 (nucleophile) is an active-site residue. 192-197 is an NADP(+) binding site; it reads GTGAYA.

Belongs to the glutamyl-tRNA reductase family. Homodimer.

It carries out the reaction (S)-4-amino-5-oxopentanoate + tRNA(Glu) + NADP(+) = L-glutamyl-tRNA(Glu) + NADPH + H(+). It functions in the pathway porphyrin-containing compound metabolism; protoporphyrin-IX biosynthesis; 5-aminolevulinate from L-glutamyl-tRNA(Glu): step 1/2. Catalyzes the NADPH-dependent reduction of glutamyl-tRNA(Glu) to glutamate 1-semialdehyde (GSA). This chain is Glutamyl-tRNA reductase, found in Pseudarthrobacter chlorophenolicus (strain ATCC 700700 / DSM 12829 / CIP 107037 / JCM 12360 / KCTC 9906 / NCIMB 13794 / A6) (Arthrobacter chlorophenolicus).